Reading from the N-terminus, the 406-residue chain is Erythromycin esterase type I (406 aa).

This enzyme confers resistance to erythromycin through inactivation by hydrolyzing the lactone ring of the antibiotic. The protein is Erythromycin esterase type I (ereA) of Escherichia coli.